The primary structure comprises 320 residues: ATP-dependent 6-phosphofructokinase (320 aa).

An ATP-binding site is contributed by Gly-11. 21–25 is a binding site for ADP; it reads RAVVR. ATP-binding positions include 72–73 and 102–105; these read RC and GDGS. A Mg(2+)-binding site is contributed by Asp-103. 125 to 127 lines the substrate pocket; the sequence is TID. The Proton acceptor role is filled by Asp-127. Arg-154 is a binding site for ADP. Substrate-binding positions include Arg-162 and 169–171; that span reads MGR. Residues 185–187 and 214–216 contribute to the ADP site; these read GAE and KTH. Residues Glu-223, Arg-244, and 250-253 each bind substrate; that span reads HIQR.

The protein belongs to the phosphofructokinase type A (PFKA) family. ATP-dependent PFK group I subfamily. Prokaryotic clade 'B1' sub-subfamily. In terms of assembly, homotetramer. Mg(2+) is required as a cofactor.

It localises to the cytoplasm. The catalysed reaction is beta-D-fructose 6-phosphate + ATP = beta-D-fructose 1,6-bisphosphate + ADP + H(+). It functions in the pathway carbohydrate degradation; glycolysis; D-glyceraldehyde 3-phosphate and glycerone phosphate from D-glucose: step 3/4. With respect to regulation, allosterically activated by ADP and other diphosphonucleosides, and allosterically inhibited by phosphoenolpyruvate. Functionally, catalyzes the phosphorylation of D-fructose 6-phosphate to fructose 1,6-bisphosphate by ATP, the first committing step of glycolysis. The polypeptide is ATP-dependent 6-phosphofructokinase (Clostridium botulinum (strain Eklund 17B / Type B)).